The chain runs to 198 residues: Glycerol-3-phosphate acyltransferase 1 (198 aa).

5 helical membrane-spanning segments follow: residues 5–25 (ALLA…AWLA), 52–72 (GPAL…VLLA), 81–101 (WAAL…FLAF), 111–131 (FGVI…LAIA), and 138–158 (FVSA…LVLP).

This sequence belongs to the PlsY family. In terms of assembly, probably interacts with PlsX.

It localises to the cell membrane. The catalysed reaction is an acyl phosphate + sn-glycerol 3-phosphate = a 1-acyl-sn-glycero-3-phosphate + phosphate. It participates in lipid metabolism; phospholipid metabolism. In terms of biological role, catalyzes the transfer of an acyl group from acyl-phosphate (acyl-PO(4)) to glycerol-3-phosphate (G3P) to form lysophosphatidic acid (LPA). This enzyme utilizes acyl-phosphate as fatty acyl donor, but not acyl-CoA or acyl-ACP. The sequence is that of Glycerol-3-phosphate acyltransferase 1 from Deinococcus radiodurans (strain ATCC 13939 / DSM 20539 / JCM 16871 / CCUG 27074 / LMG 4051 / NBRC 15346 / NCIMB 9279 / VKM B-1422 / R1).